A 437-amino-acid polypeptide reads, in one-letter code: Branched-chain amino acid transport system 3 carrier protein (437 aa).

A run of 12 helical transmembrane segments spans residues 9 to 29, 40 to 60, 79 to 99, 120 to 140, 155 to 175, 189 to 209, 226 to 246, 277 to 297, 316 to 336, 342 to 362, 369 to 389, and 399 to 419; these read ILAL…IIFP, VWLA…ITVI, YAGG…FAIP, ALFV…LYPG, ILAL…PIGT, FVNG…IVIV, YAIV…VSLF, LGSS…AVGL, LVII…TKLI, VLTA…CIGL, ILAP…LKAA, and LLHL…VATL.

This sequence belongs to the branched chain amino acid transporter family.

The protein localises to the cell inner membrane. In terms of biological role, component of the LIV-III transport system for branched-chain amino acids. BraZ is specific for isoleucine and valine. The LIV-III transport system may be H(+)-coupled. In Pseudomonas aeruginosa (strain ATCC 15692 / DSM 22644 / CIP 104116 / JCM 14847 / LMG 12228 / 1C / PRS 101 / PAO1), this protein is Branched-chain amino acid transport system 3 carrier protein (braZ).